We begin with the raw amino-acid sequence, 248 residues long: Probable phosphatase VPA0505 (248 aa).

Zn(2+) contacts are provided by H8, H10, H16, H41, E74, H102, H132, D194, and H196.

This sequence belongs to the PHP family. Zn(2+) serves as cofactor.

The polypeptide is Probable phosphatase VPA0505 (Vibrio parahaemolyticus serotype O3:K6 (strain RIMD 2210633)).